The chain runs to 207 residues: Claudin-11 (207 aa).

M1 is a topological domain (cytoplasmic). A helical transmembrane segment spans residues 2-22 (VATCLQVVGFVTSFVGWIGVI). Over 23 to 82 (VTTSTNDWVVTCGYTIPTCRKLDELGSKGLWADCVMATGLYHCKPLVDILILPGYVQACR) the chain is Extracellular. Residues 83-103 (ALMIAASVLGLPAILLLLTVL) form a helical membrane-spanning segment. The Cytoplasmic segment spans residues 104 to 122 (PCIRMGQEPGVAKYRRAQL). Residues 123–143 (AGVLLILLALCALVATIWFPV) form a helical membrane-spanning segment. At 144–157 (CAHRETTIVSFGYS) the chain is on the extracellular side. A helical transmembrane segment spans residues 158-178 (LYAGWIGAVLCLVGGCVILCC). At 179-207 (AGDAQAFGENRFYYTAGSSSPTHAKSAHV) the chain is on the cytoplasmic side. 2 positions are modified to phosphoserine: S197 and S198.

The protein belongs to the claudin family. In terms of assembly, interacts with tetraspanin-3/TSPAN3. Interacts with OCLN.

The protein localises to the cell junction. It localises to the tight junction. Its subcellular location is the cell membrane. In terms of biological role, plays a major role in tight junction-specific obliteration of the intercellular space, through calcium-independent cell-adhesion activity. This Homo sapiens (Human) protein is Claudin-11 (CLDN11).